Consider the following 137-residue polypeptide: Small ribosomal subunit protein uS12 (137 aa).

A disordered region spans residues 1 to 23; it reads MPTINQLVRKGRKSKSSKSDAPA. Position 102 is a 3-methylthioaspartic acid (aspartate 102).

It belongs to the universal ribosomal protein uS12 family. Part of the 30S ribosomal subunit. Contacts proteins S8 and S17. May interact with IF1 in the 30S initiation complex.

With S4 and S5 plays an important role in translational accuracy. Its function is as follows. Interacts with and stabilizes bases of the 16S rRNA that are involved in tRNA selection in the A site and with the mRNA backbone. Located at the interface of the 30S and 50S subunits, it traverses the body of the 30S subunit contacting proteins on the other side and probably holding the rRNA structure together. The combined cluster of proteins S8, S12 and S17 appears to hold together the shoulder and platform of the 30S subunit. The protein is Small ribosomal subunit protein uS12 of Levilactobacillus brevis (strain ATCC 367 / BCRC 12310 / CIP 105137 / JCM 1170 / LMG 11437 / NCIMB 947 / NCTC 947) (Lactobacillus brevis).